Here is a 204-residue protein sequence, read N- to C-terminus: Putative 3-methyladenine DNA glycosylase (204 aa).

Belongs to the DNA glycosylase MPG family.

This is Putative 3-methyladenine DNA glycosylase from Mycobacterium sp. (strain KMS).